Reading from the N-terminus, the 270-residue chain is Phospholipase A and acyltransferase 5 (270 aa).

Disordered regions lie at residues methionine 1–serine 54 and arginine 70–proline 122. Polar residues-rich tracts occupy residues threonine 24 to serine 54 and isoleucine 100 to valine 116. The region spanning leucine 127–glutamine 240 is the LRAT domain. Catalysis depends on residues histidine 137 and histidine 149. Cysteine 224 serves as the catalytic Acyl-thioester intermediate.

The protein belongs to the H-rev107 family. Isoform 4 shows highest expression level in testis.

It is found in the cytoplasm. Its subcellular location is the cytosol. It carries out the reaction a 1,2-diacyl-sn-glycero-3-phosphocholine + H2O = a 1-acyl-sn-glycero-3-phosphocholine + a fatty acid + H(+). It catalyses the reaction a 1,2-diacyl-sn-glycero-3-phosphocholine + H2O = a 2-acyl-sn-glycero-3-phosphocholine + a fatty acid + H(+). The enzyme catalyses 1-hexadecanoyl-2-(5Z,8Z,11Z,14Z-eicosatetraenoyl)-sn-glycero-3-phosphocholine + 1,2-di-(9Z-octadecenoyl)-sn-glycero-3-phosphoethanolamine = N-(5Z,8Z,11Z,14Z-eicosatetraenoyl)-1,2-di-(9Z-octadecenoyl)-sn-glycero-3-phosphoethanolamine + 1-hexadecanoyl-sn-glycero-3-phosphocholine + H(+). The catalysed reaction is 1,2-di-(9Z-octadecenoyl)-sn-glycero-3-phosphoethanolamine + 1,2-dihexadecanoyl-sn-glycero-3-phosphocholine = N-hexadecanoyl-1,2-di-(9Z-octadecenoyl)-sn-glycero-3-phosphoethanolamine + 1-hexadecanoyl-sn-glycero-3-phosphocholine + H(+). It carries out the reaction 1,2-di-(9Z-octadecenoyl)-sn-glycero-3-phosphoethanolamine + 1,2-dihexadecanoyl-sn-glycero-3-phosphocholine = N-hexadecanoyl-1,2-di-(9Z-octadecenoyl)-sn-glycero-3-phosphoethanolamine + 2-hexadecanoyl-sn-glycero-3-phosphocholine + H(+). It catalyses the reaction a 1,2-diacyl-sn-glycero-3-phosphoethanolamine + a 1,2-diacyl-sn-glycero-3-phosphocholine = an N-acyl-1,2-diacyl-sn-glycero-3-phosphoethanolamine + a 1-acyl-sn-glycero-3-phosphocholine + H(+). The enzyme catalyses a 1,2-diacyl-sn-glycero-3-phosphoethanolamine + a 1,2-diacyl-sn-glycero-3-phosphocholine = an N-acyl-1,2-diacyl-sn-glycero-3-phosphoethanolamine + a 2-acyl-sn-glycero-3-phosphocholine + H(+). The catalysed reaction is 1-hexadecanoyl-2-(9Z-octadecenoyl)-sn-glycero-3-phosphocholine + 1,2-di-(9Z-octadecenoyl)-sn-glycero-3-phosphoethanolamine = N,1,2-tri-(9Z-octadecenoyl)-sn-glycero-3-phosphoethanolamine + 1-hexadecanoyl-sn-glycero-3-phosphocholine + H(+). Functionally, exhibits both phospholipase A1/2 and acyltransferase activities. Shows phospholipase A1 (PLA1) and A2 (PLA2) activity, catalyzing the calcium-independent release of fatty acids from the sn-1 or sn-2 position of glycerophospholipids. Shows N-acyltransferase activity, catalyzing the calcium-independent transfer of a fatty acyl group at the sn-1 position of phosphatidylcholine (PC) and other glycerophospholipids to the primary amine of phosphatidylethanolamine (PE), forming N-acylphosphatidylethanolamine (NAPE), which serves as precursor for N-acylethanolamines (NAEs). The protein is Phospholipase A and acyltransferase 5 of Mus musculus (Mouse).